Consider the following 130-residue polypeptide: Small ribosomal subunit protein uS11 (130 aa).

The protein belongs to the universal ribosomal protein uS11 family. Part of the 30S ribosomal subunit. Interacts with proteins S7 and S18. Binds to IF-3.

In terms of biological role, located on the platform of the 30S subunit, it bridges several disparate RNA helices of the 16S rRNA. Forms part of the Shine-Dalgarno cleft in the 70S ribosome. The protein is Small ribosomal subunit protein uS11 of Nitratiruptor sp. (strain SB155-2).